The following is a 348-amino-acid chain: Ileal sodium/bile acid cotransporter (348 aa).

Topologically, residues 1–28 (MDNSSVCPPNATVCEGDSCVVPESNFNA) are extracellular. N-linked (GlcNAc...) asparagine glycans are attached at residues Asn-3 and Asn-10. The chain crosses the membrane as a helical span at residues 29–49 (ILNTVMSTVLTILLAMVMFSM). At 50–87 (GCNVEVHKFLGHIKRPWGIFVGFLCQFGIMPLTGFILS) the chain is on the cytoplasmic side. A helical membrane pass occupies residues 88–108 (VASGILPVQAVVVLIMGCCPG). The Extracellular segment spans residues 109–126 (GTGSNILAYWIDGDMDLS). Residues 127–147 (VSMTTCSTLLALGMMPLCLFV) form a helical membrane-spanning segment. The Cytoplasmic segment spans residues 148–157 (YTKMWVDSGT). A helical membrane pass occupies residues 158 to 178 (IVIPYDSIGISLVALVIPVSF). At 179–195 (GMFVNHKWPQKAKIILK) the chain is on the extracellular side. Residues 196 to 216 (IGSITGVILIVLIAVIGGILY) traverse the membrane as a helical segment. The Cytoplasmic segment spans residues 217–224 (QSAWIIEP). Residues 225-245 (KLWIIGTIFPIAGYSLGFFLA) form a helical membrane-spanning segment. Over 246–284 (RLAGQPWYRCRTVALETGMQNTQLCSTIVQLSFSPEDLN) the chain is Extracellular. The chain crosses the membrane as a helical span at residues 285 to 305 (LVFTFPLIYTVFQLVFAAVIL). Over 306–348 (GIYVTYRKCYGKNDAEFLEKTDNEMDSRPSFDETNKGFQPDEK) the chain is Cytoplasmic. Positions 328-348 (NEMDSRPSFDETNKGFQPDEK) are disordered. Ser-335 bears the Phosphoserine mark.

Belongs to the bile acid:sodium symporter (BASS) (TC 2.A.28) family. Monomer and homodimer. As to expression, expressed in ileum.

The protein resides in the membrane. It carries out the reaction taurocholate(out) + 2 Na(+)(out) = taurocholate(in) + 2 Na(+)(in). The catalysed reaction is cholate(out) + 2 Na(+)(out) = cholate(in) + 2 Na(+)(in). The enzyme catalyses taurochenodeoxycholate(out) + 2 Na(+)(out) = taurochenodeoxycholate(in) + 2 Na(+)(in). It catalyses the reaction tauroursodeoxycholate(out) + 2 Na(+)(out) = tauroursodeoxycholate(in) + 2 Na(+)(in). It carries out the reaction glycocholate(out) + 2 Na(+)(out) = glycocholate(in) + 2 Na(+)(in). The catalysed reaction is tauronorcholate(out) + 2 Na(+)(out) = tauronorcholate(in) + 2 Na(+)(in). The enzyme catalyses tauroallocholate(out) + 2 Na(+)(out) = tauroallocholate(in) + 2 Na(+)(in). It catalyses the reaction taurodeoxycholate(out) + 2 Na(+)(out) = taurodeoxycholate(in) + 2 Na(+)(in). It carries out the reaction tauro-beta-muricholate(out) + 2 Na(+)(out) = tauro-beta-muricholate(in) + 2 Na(+)(in). Functionally, plays a critical role in the sodium-dependent reabsorption of bile acids from the lumen of the small intestine. Transports various bile acids, unconjugated or conjugated, such as cholate and taurocholate. Also responsible for bile acid transport in the renal proximal tubules, a salvage mechanism that helps conserve bile acids. Works collaboratively with the Na(+)-taurocholate cotransporting polypeptide (NTCP), the organic solute transporter (OST), and the bile salt export pump (BSEP), to ensure efficacious biological recycling of bile acids during enterohepatic circulation. In Mus musculus (Mouse), this protein is Ileal sodium/bile acid cotransporter (Slc10a2).